The primary structure comprises 945 residues: Netrin receptor UNC5B (945 aa).

An N-terminal signal peptide occupies residues 1–26; the sequence is MRARSGVRSALLLALLLCWDPTPSLA. Residues 27 to 377 are Extracellular-facing; that stretch reads GVDSAGQVLP…LETSGDVALY (351 aa). Positions 48–145 constitute an Ig-like domain; that stretch reads PYFLLEPQDA…SGTTKSRRAY (98 aa). 9 cysteine pairs are disulfide-bonded: C69/C130, C81/C128, C174/C225, C258/C295, C262/C299, C273/C285, C314/C348, C318/C353, and C326/C338. The region spanning 153–242 is the Ig-like C2-type domain; it reads KNFDQEPLAK…KRRSTTATVI (90 aa). The N-linked (GlcNAc...) asparagine glycan is linked to N222. TSP type-1 domains are found at residues 246–300 and 302–354; these read NGGW…TVCP and DGAW…GLCV. The N-linked (GlcNAc...) asparagine glycan is linked to N347. The chain crosses the membrane as a helical span at residues 378-398; the sequence is AGLVVAVFVVVAVLMAVGVIV. Over 399–945 the chain is Cytoplasmic; sequence YRRNCRDFDT…LVAMATDGDC (547 aa). C403 carries S-palmitoyl cysteine lipidation. The ZU5 domain maps to 543-686; the sequence is SSVSGTFGCL…LGTYVFMGES (144 aa). Y581 is subject to Phosphotyrosine. The interval 689-838 is UPA domain; sequence RSAVKRLQLA…AETPAGSLDA (150 aa). Residues 707-725 are interaction with DCC; that stretch reads SLEYSLRVYCLEDTPVALK. Residues 865–943 form the Death domain; that stretch reads KICSSLDAPN…EMLVAMATDG (79 aa).

The protein belongs to the unc-5 family. In terms of assembly, interacts with the cytoplasmic part of DCC. Interacts with GNAI2 via its cytoplasmic part. Interacts (via death domain) with DAPK1 (via death domain). Interacts (via extracellular domain) with FLRT2 and FLRT3 (via extracellular domain), but has higher affinity for FLRT3. Identified in a complex with FLRT3 and ADGRL3; does not interact with ADGRL3 by itself. Phosphorylated on cytoplasmic tyrosine residues. Post-translationally, palmitoylation is required for pro-apoptotic activity, but not for location at lipid rafts. In terms of processing, proteolytically cleaved by caspases during apoptosis. The cleavage does not take place when the receptor is associated with netrin ligand. Its cleavage by caspases is required to induce apoptosis. In terms of tissue distribution, highly expressed in brain. Expressed in lung during late development. Expressed during early blood vessel formation, in the semicircular canal and in a dorsal to ventral gradient in the retina.

The protein localises to the cell membrane. The protein resides in the membrane raft. Receptor for netrin required for axon guidance. Mediates axon repulsion of neuronal growth cones in the developing nervous system upon ligand binding. Axon repulsion in growth cones may be caused by its association with DCC that may trigger signaling for repulsion. Functions as a netrin receptor that negatively regulates vascular branching during angiogenesis. Mediates retraction of tip cell filopodia on endothelial growth cones in response to netrin. It also acts as a dependence receptor required for apoptosis induction when not associated with netrin ligand. Mediates apoptosis by activating DAPK1. In the absence of NTN1, activates DAPK1 by reducing its autoinhibitory phosphorylation at Ser-308 thereby increasing its catalytic activity. In Mus musculus (Mouse), this protein is Netrin receptor UNC5B (Unc5b).